The sequence spans 1011 residues: CRM-domain containing factor CFM2, chloroplastic (1011 aa).

The transit peptide at M1–F45 directs the protein to the chloroplast. The span at H77–G90 shows a compositional bias: basic and acidic residues. The tract at residues H77–E96 is disordered. 3 CRM domains span residues L164–S260, P376–S473, and E577–R677. Disordered regions lie at residues D721–L810 and L841–V872. Over residues S722 to M736 the composition is skewed to polar residues. Residues E743–E757 show a composition bias toward basic and acidic residues. Residues S762 to E771 are compositionally biased toward polar residues. Acidic residues predominate over residues E772–V782. The span at G849–S859 shows a compositional bias: polar residues. In terms of domain architecture, CRM 4 spans T873–F972.

As to quaternary structure, interacts with RNA. Part of large ribonucleo-protein particles that contain CAF1 and/or CAF2.

It is found in the plastid. The protein localises to the chloroplast stroma. Its function is as follows. Binds specific group II introns in chloroplasts and facilitates their splicing. Acts on both subgroup IIA and subgroup IIB introns. The substrates of the subgroup IIB also require the CRM domain proteins CAF1 or CAF2, with a simultaneous binding of CFM2 and CAF1 or CAF2. Can bind to and promote the splicing of the single group I intron in chloroplast tRNA transcript of trnL-UAA gene. This chain is CRM-domain containing factor CFM2, chloroplastic, found in Arabidopsis thaliana (Mouse-ear cress).